The primary structure comprises 227 residues: Cytochrome c oxidase subunit 2 (227 aa).

Topologically, residues 1 to 14 (MPYPLQLGLQDATS) are mitochondrial intermembrane. A helical membrane pass occupies residues 15 to 45 (PIMEELTHFHDHTLMIVFLISSLVLYIISSM). The Mitochondrial matrix segment spans residues 46–59 (LTTKLTHTSTMDAQ). A helical membrane pass occupies residues 60 to 87 (EVETIWTILPAMILILIALPSLRILYMM). Topologically, residues 88 to 227 (DEINDPSLTV…YFEDWSASLL (140 aa)) are mitochondrial intermembrane. Cu cation contacts are provided by His161, Cys196, Glu198, Cys200, His204, and Met207. Glu198 provides a ligand contact to Mg(2+).

Belongs to the cytochrome c oxidase subunit 2 family. In terms of assembly, component of the cytochrome c oxidase (complex IV, CIV), a multisubunit enzyme composed of 14 subunits. The complex is composed of a catalytic core of 3 subunits MT-CO1, MT-CO2 and MT-CO3, encoded in the mitochondrial DNA, and 11 supernumerary subunits COX4I, COX5A, COX5B, COX6A, COX6B, COX6C, COX7A, COX7B, COX7C, COX8 and NDUFA4, which are encoded in the nuclear genome. The complex exists as a monomer or a dimer and forms supercomplexes (SCs) in the inner mitochondrial membrane with NADH-ubiquinone oxidoreductase (complex I, CI) and ubiquinol-cytochrome c oxidoreductase (cytochrome b-c1 complex, complex III, CIII), resulting in different assemblies (supercomplex SCI(1)III(2)IV(1) and megacomplex MCI(2)III(2)IV(2)). Found in a complex with TMEM177, COA6, COX18, COX20, SCO1 and SCO2. Interacts with TMEM177 in a COX20-dependent manner. Interacts with COX20. Interacts with COX16. Requires Cu cation as cofactor.

The protein localises to the mitochondrion inner membrane. The enzyme catalyses 4 Fe(II)-[cytochrome c] + O2 + 8 H(+)(in) = 4 Fe(III)-[cytochrome c] + 2 H2O + 4 H(+)(out). Component of the cytochrome c oxidase, the last enzyme in the mitochondrial electron transport chain which drives oxidative phosphorylation. The respiratory chain contains 3 multisubunit complexes succinate dehydrogenase (complex II, CII), ubiquinol-cytochrome c oxidoreductase (cytochrome b-c1 complex, complex III, CIII) and cytochrome c oxidase (complex IV, CIV), that cooperate to transfer electrons derived from NADH and succinate to molecular oxygen, creating an electrochemical gradient over the inner membrane that drives transmembrane transport and the ATP synthase. Cytochrome c oxidase is the component of the respiratory chain that catalyzes the reduction of oxygen to water. Electrons originating from reduced cytochrome c in the intermembrane space (IMS) are transferred via the dinuclear copper A center (CU(A)) of subunit 2 and heme A of subunit 1 to the active site in subunit 1, a binuclear center (BNC) formed by heme A3 and copper B (CU(B)). The BNC reduces molecular oxygen to 2 water molecules using 4 electrons from cytochrome c in the IMS and 4 protons from the mitochondrial matrix. In Dugong dugon (Dugong), this protein is Cytochrome c oxidase subunit 2 (MT-CO2).